A 378-amino-acid chain; its full sequence is Protein RecA (378 aa).

79 to 86 provides a ligand contact to ATP; sequence GPESSGKT.

The protein belongs to the RecA family.

The protein localises to the cytoplasm. In terms of biological role, can catalyze the hydrolysis of ATP in the presence of single-stranded DNA, the ATP-dependent uptake of single-stranded DNA by duplex DNA, and the ATP-dependent hybridization of homologous single-stranded DNAs. It interacts with LexA causing its activation and leading to its autocatalytic cleavage. The protein is Protein RecA of Streptococcus equi subsp. zooepidemicus (strain H70).